A 325-amino-acid chain; its full sequence is Solute carrier family 35 member B1 (325 aa).

Helical transmembrane passes span P18–I38, F54–I74, W88–L108, Y139–Y159, I171–V191, L213–L233, I246–Y266, and V288–L308. The Di-lysine motif motif lies at K321 to H325.

It belongs to the nucleotide-sugar transporter family. SLC35B subfamily.

The protein resides in the endoplasmic reticulum membrane. Functionally, probable sugar transporter. The sequence is that of Solute carrier family 35 member B1 (SLC35B1) from Gallus gallus (Chicken).